The sequence spans 187 residues: Elongation factor P (187 aa).

Belongs to the elongation factor P family.

The protein localises to the cytoplasm. The protein operates within protein biosynthesis; polypeptide chain elongation. Its function is as follows. Involved in peptide bond synthesis. Stimulates efficient translation and peptide-bond synthesis on native or reconstituted 70S ribosomes in vitro. Probably functions indirectly by altering the affinity of the ribosome for aminoacyl-tRNA, thus increasing their reactivity as acceptors for peptidyl transferase. This Zymomonas mobilis subsp. mobilis (strain ATCC 31821 / ZM4 / CP4) protein is Elongation factor P.